A 341-amino-acid chain; its full sequence is tRNA-specific 2-thiouridylase MnmA (341 aa).

ATP contacts are provided by residues 8–15 (GMSGGVDS) and M34. C94 functions as the Nucleophile in the catalytic mechanism. A disulfide bridge links C94 with C188. G118 contributes to the ATP binding site. Positions 136–138 (KDQ) are interaction with tRNA. The Cysteine persulfide intermediate role is filled by C188. Residues 290–291 (RY) are interaction with tRNA.

The protein belongs to the MnmA/TRMU family.

It localises to the cytoplasm. It catalyses the reaction S-sulfanyl-L-cysteinyl-[protein] + uridine(34) in tRNA + AH2 + ATP = 2-thiouridine(34) in tRNA + L-cysteinyl-[protein] + A + AMP + diphosphate + H(+). Its function is as follows. Catalyzes the 2-thiolation of uridine at the wobble position (U34) of tRNA, leading to the formation of s(2)U34. The sequence is that of tRNA-specific 2-thiouridylase MnmA from Sulfurimonas denitrificans (strain ATCC 33889 / DSM 1251) (Thiomicrospira denitrificans (strain ATCC 33889 / DSM 1251)).